A 359-amino-acid chain; its full sequence is Aspartate carbamoyltransferase catalytic subunit (359 aa).

2 residues coordinate carbamoyl phosphate: arginine 52 and threonine 53. Lysine 81 contacts L-aspartate. 3 residues coordinate carbamoyl phosphate: arginine 102, histidine 130, and glutamine 133. Arginine 163 and arginine 224 together coordinate L-aspartate. Residues leucine 264 and proline 265 each coordinate carbamoyl phosphate.

This sequence belongs to the aspartate/ornithine carbamoyltransferase superfamily. ATCase family. Heterododecamer (2C3:3R2) of six catalytic PyrB chains organized as two trimers (C3), and six regulatory PyrI chains organized as three dimers (R2).

The enzyme catalyses carbamoyl phosphate + L-aspartate = N-carbamoyl-L-aspartate + phosphate + H(+). It functions in the pathway pyrimidine metabolism; UMP biosynthesis via de novo pathway; (S)-dihydroorotate from bicarbonate: step 2/3. Its function is as follows. Catalyzes the condensation of carbamoyl phosphate and aspartate to form carbamoyl aspartate and inorganic phosphate, the committed step in the de novo pyrimidine nucleotide biosynthesis pathway. In Brachyspira hyodysenteriae (strain ATCC 49526 / WA1), this protein is Aspartate carbamoyltransferase catalytic subunit.